The following is a 391-amino-acid chain: tRNA (cytosine(38)-C(5))-methyltransferase (391 aa).

In terms of domain architecture, SAM-dependent MTase C5-type spans L4–E391. S-adenosyl-L-methionine is bound by residues I13–G15, D34, I57–E58, and S76. C79 is a catalytic residue. Position 376 (S376) interacts with S-adenosyl-L-methionine.

Belongs to the class I-like SAM-binding methyltransferase superfamily. C5-methyltransferase family.

The protein localises to the cytoplasm. The catalysed reaction is cytidine(38) in tRNA + S-adenosyl-L-methionine = 5-methylcytidine(38) in tRNA + S-adenosyl-L-homocysteine + H(+). In terms of biological role, specifically methylates cytosine 38 in the anticodon loop of tRNA(Asp). Has higher activity on tRNA(Asp) modified with queuosine at position 34. The protein is tRNA (cytosine(38)-C(5))-methyltransferase (Trdmt1) of Rattus norvegicus (Rat).